The chain runs to 79 residues: MORN repeat-containing protein 2 (79 aa).

MORN repeat units follow at residues 15-37 (YEGHFKDNMFHGLGTYTFPNGAK) and 38-60 (YTGNFNENRVEGEGQYTDIQGLE).

The sequence is that of MORN repeat-containing protein 2 (MORN2) from Bos taurus (Bovine).